The sequence spans 236 residues: Proliferating cell nuclear antigen (236 aa).

The DNA-binding element occupies 31–50 (RCDRNISMGMNLNNMAKMLK).

Belongs to the PCNA family.

Its subcellular location is the nucleus. In terms of biological role, this protein is an auxiliary protein of DNA polymerase delta and is involved in the control of eukaryotic DNA replication by increasing the polymerase's processibility during elongation of the leading strand. The sequence is that of Proliferating cell nuclear antigen from Glycine max (Soybean).